The sequence spans 576 residues: Adenine deaminase (576 aa).

This sequence belongs to the metallo-dependent hydrolases superfamily. Adenine deaminase family. Requires Mn(2+) as cofactor.

The enzyme catalyses adenine + H2O + H(+) = hypoxanthine + NH4(+). The chain is Adenine deaminase from Bacillus pumilus (strain SAFR-032).